We begin with the raw amino-acid sequence, 481 residues long: Neuronal acetylcholine receptor subunit eat-2 (481 aa).

The N-terminal stretch at 1-19 (MFLLLQILYILLFLNLADT) is a signal peptide. Topologically, residues 20–235 (SDDEYRLLKD…MHLKRRTMYY (216 aa)) are extracellular. Asn-93 carries N-linked (GlcNAc...) asparagine glycosylation. A disulfide bridge connects residues Cys-147 and Cys-161. The next 3 helical transmembrane spans lie at 236-256 (GLNW…GFTM), 264-284 (VTLQ…VSEV), and 292-312 (IPII…SICV). Topologically, residues 313–443 (SLITVNIFYR…WRFMAMVIDR (131 aa)) are cytoplasmic. The segment at 356–384 (KPKREKKKEEEEDEESNAGGKEEESELIS) is disordered. Residues 444–464 (ASLFLFTGLIFGTTFVIFAAC) traverse the membrane as a helical segment.

Belongs to the ligand-gated ion channel (TC 1.A.9) family. Acetylcholine receptor (TC 1.A.9.1) subfamily. As to quaternary structure, neuronal AChR seems to be composed of two different type of subunits: alpha and beta.

It is found in the postsynaptic cell membrane. It localises to the cell membrane. In terms of biological role, after binding acetylcholine, the AChR responds by an extensive change in conformation that affects all subunits and leads to opening of an ion-conducting channel across the plasma membrane. Nicotinic acetylcholine receptor in the MC pharyngeal motor neuron involved in pharyngeal pumping. Has a role in the determination of life span possibly via calorific restriction which affects growth rate, although this is independent of metabolic activity. The protein is Neuronal acetylcholine receptor subunit eat-2 of Caenorhabditis briggsae.